The primary structure comprises 469 residues: Adenosylhomocysteinase (469 aa).

The substrate site is built by Thr-60, Asp-135, and Glu-195. Residue 196-198 coordinates NAD(+); it reads TTT. Positions 225 and 229 each coordinate substrate. NAD(+) contacts are provided by residues Asn-230, 259–264, Glu-282, Asn-317, 338–340, and Asn-383; these read GYGDVG and IGH.

This sequence belongs to the adenosylhomocysteinase family. NAD(+) is required as a cofactor.

It is found in the cytoplasm. It carries out the reaction S-adenosyl-L-homocysteine + H2O = L-homocysteine + adenosine. It participates in amino-acid biosynthesis; L-homocysteine biosynthesis; L-homocysteine from S-adenosyl-L-homocysteine: step 1/1. Its function is as follows. May play a key role in the regulation of the intracellular concentration of adenosylhomocysteine. The protein is Adenosylhomocysteinase of Hyphomonas neptunium (strain ATCC 15444).